The sequence spans 97 residues: Aspartyl/glutamyl-tRNA(Asn/Gln) amidotransferase subunit C (97 aa).

Belongs to the GatC family. In terms of assembly, heterotrimer of A, B and C subunits.

It carries out the reaction L-glutamyl-tRNA(Gln) + L-glutamine + ATP + H2O = L-glutaminyl-tRNA(Gln) + L-glutamate + ADP + phosphate + H(+). The catalysed reaction is L-aspartyl-tRNA(Asn) + L-glutamine + ATP + H2O = L-asparaginyl-tRNA(Asn) + L-glutamate + ADP + phosphate + 2 H(+). In terms of biological role, allows the formation of correctly charged Asn-tRNA(Asn) or Gln-tRNA(Gln) through the transamidation of misacylated Asp-tRNA(Asn) or Glu-tRNA(Gln) in organisms which lack either or both of asparaginyl-tRNA or glutaminyl-tRNA synthetases. The reaction takes place in the presence of glutamine and ATP through an activated phospho-Asp-tRNA(Asn) or phospho-Glu-tRNA(Gln). The chain is Aspartyl/glutamyl-tRNA(Asn/Gln) amidotransferase subunit C from Picosynechococcus sp. (strain ATCC 27264 / PCC 7002 / PR-6) (Agmenellum quadruplicatum).